A 636-amino-acid chain; its full sequence is Probable potassium transport system protein Kup (636 aa).

Helical transmembrane passes span 23–43, 57–77, 111–131, 148–168, 179–199, 217–237, 258–278, 287–307, 348–368, 377–397, 409–429, and 431–451; these read MALM…SPLY, PAHV…VVSL, WLLI…SMIT, HTLE…LFAI, LFGP…GYQI, FIAE…LALT, WFAM…ALLL, PFFL…ATVA, IYLP…VLLF, AYGF…FAVL, WMVL…ANIF, and IHEG…LMMT.

The protein belongs to the HAK/KUP transporter (TC 2.A.72) family.

The protein localises to the cell inner membrane. The enzyme catalyses K(+)(in) + H(+)(in) = K(+)(out) + H(+)(out). Its function is as follows. Transport of potassium into the cell. Likely operates as a K(+):H(+) symporter. The polypeptide is Probable potassium transport system protein Kup (Bordetella bronchiseptica (strain ATCC BAA-588 / NCTC 13252 / RB50) (Alcaligenes bronchisepticus)).